The following is a 464-amino-acid chain: tRNA-2-methylthio-N(6)-dimethylallyladenosine synthase (464 aa).

Positions 1-25 (MSDLVPLSRKPAPAAGDPAPSPAAP) are disordered. One can recognise an MTTase N-terminal domain in the interval 27–142 (RKVYVHTFGC…LPEMVERARG (116 aa)). Residues Cys-36, Cys-72, Cys-105, Cys-180, Cys-184, and Cys-187 each contribute to the [4Fe-4S] cluster site. Residues 166–398 (ARGRATAFVT…LAAQRRIAGE (233 aa)) form the Radical SAM core domain. The region spanning 401–464 (AAELGKVVEV…GGSSLSGTLA (64 aa)) is the TRAM domain.

This sequence belongs to the methylthiotransferase family. MiaB subfamily. As to quaternary structure, monomer. It depends on [4Fe-4S] cluster as a cofactor.

It localises to the cytoplasm. It carries out the reaction N(6)-dimethylallyladenosine(37) in tRNA + (sulfur carrier)-SH + AH2 + 2 S-adenosyl-L-methionine = 2-methylsulfanyl-N(6)-dimethylallyladenosine(37) in tRNA + (sulfur carrier)-H + 5'-deoxyadenosine + L-methionine + A + S-adenosyl-L-homocysteine + 2 H(+). Functionally, catalyzes the methylthiolation of N6-(dimethylallyl)adenosine (i(6)A), leading to the formation of 2-methylthio-N6-(dimethylallyl)adenosine (ms(2)i(6)A) at position 37 in tRNAs that read codons beginning with uridine. The sequence is that of tRNA-2-methylthio-N(6)-dimethylallyladenosine synthase from Anaeromyxobacter dehalogenans (strain 2CP-C).